The primary structure comprises 349 residues: ATPase GET3 (349 aa).

26-33 is an ATP binding site; the sequence is KGGVGKTT. The active site involves aspartate 57. Residues glutamate 242 and asparagine 269 each contribute to the ATP site. Residues cysteine 281 and cysteine 284 each contribute to the Zn(2+) site.

It belongs to the arsA ATPase family. As to quaternary structure, homodimer. Component of the Golgi to ER traffic (GET) complex, which is composed of GET1, GET2 and GET3. Within the complex, GET1 and GET2 form a heterotetramer which is stabilized by phosphatidylinositol binding and which binds to the GET3 homodimer. Interacts with the chloride channel protein GEF1.

The protein localises to the cytoplasm. Its subcellular location is the endoplasmic reticulum. It is found in the golgi apparatus. Functionally, ATPase required for the post-translational delivery of tail-anchored (TA) proteins to the endoplasmic reticulum. Recognizes and selectively binds the transmembrane domain of TA proteins in the cytosol. This complex then targets to the endoplasmic reticulum by membrane-bound receptors GET1 and GET2, where the tail-anchored protein is released for insertion. This process is regulated by ATP binding and hydrolysis. ATP binding drives the homodimer towards the closed dimer state, facilitating recognition of newly synthesized TA membrane proteins. ATP hydrolysis is required for insertion. Subsequently, the homodimer reverts towards the open dimer state, lowering its affinity for the GET1-GET2 receptor, and returning it to the cytosol to initiate a new round of targeting. Cooperates with the HDEL receptor ERD2 to mediate the ATP-dependent retrieval of resident ER proteins that contain a C-terminal H-D-E-L retention signal from the Golgi to the ER. Involved in low-level resistance to the oxyanions arsenite and arsenate, and in heat tolerance. The chain is ATPase GET3 from Candida tropicalis (strain ATCC MYA-3404 / T1) (Yeast).